Consider the following 670-residue polypeptide: Glycine--tRNA ligase beta subunit (670 aa).

The protein belongs to the class-II aminoacyl-tRNA synthetase family. Tetramer of two alpha and two beta subunits.

The protein localises to the cytoplasm. The catalysed reaction is tRNA(Gly) + glycine + ATP = glycyl-tRNA(Gly) + AMP + diphosphate. This Thermotoga neapolitana (strain ATCC 49049 / DSM 4359 / NBRC 107923 / NS-E) protein is Glycine--tRNA ligase beta subunit.